A 321-amino-acid polypeptide reads, in one-letter code: Histidine N-alpha-methyltransferase (321 aa).

An L-histidine-binding site is contributed by tyrosine 56. S-adenosyl-L-methionine contacts are provided by residues glycine 86, lysine 92, aspartate 113, and 141–142 (DF). Residues asparagine 166, tyrosine 206, and 282–284 (EVS) contribute to the L-histidine site.

Belongs to the methyltransferase superfamily. EgtD family. In terms of assembly, monomer.

It carries out the reaction L-histidine + 3 S-adenosyl-L-methionine = hercynine + 3 S-adenosyl-L-homocysteine + 3 H(+). It functions in the pathway amino-acid biosynthesis; ergothioneine biosynthesis. In terms of biological role, catalyzes the SAM-dependent triple methylation of the alpha-amino group of histidine to form hercynine, a step in the biosynthesis pathway of ergothioneine. Among all the proteinogenic amino acids, only L-histidine is a substrate. This Mycolicibacterium smegmatis (strain ATCC 700084 / mc(2)155) (Mycobacterium smegmatis) protein is Histidine N-alpha-methyltransferase.